Here is a 298-residue protein sequence, read N- to C-terminus: Cytidine deaminase (298 aa).

2 CMP/dCMP-type deaminase domains span residues 47-167 and 186-298; these read TEQQ…FGPS and DSDD…PLLG. Residue 88–90 participates in substrate binding; it reads NLE. Residue His-101 coordinates Zn(2+). The Proton donor role is filled by Glu-103. Residues Cys-128 and Cys-131 each coordinate Zn(2+).

This sequence belongs to the cytidine and deoxycytidylate deaminase family. Homodimer. Zn(2+) is required as a cofactor.

It catalyses the reaction cytidine + H2O + H(+) = uridine + NH4(+). The catalysed reaction is 2'-deoxycytidine + H2O + H(+) = 2'-deoxyuridine + NH4(+). Its function is as follows. This enzyme scavenges exogenous and endogenous cytidine and 2'-deoxycytidine for UMP synthesis. In Shewanella frigidimarina (strain NCIMB 400), this protein is Cytidine deaminase.